Consider the following 295-residue polypeptide: Putative xyloglucan endotransglucosylase/hydrolase protein 1 (295 aa).

The N-terminal stretch at 1–24 is a signal peptide; it reads MNKMEYLSIFGFVSVLYLIIRVDA. The region spanning 27–225 is the GH16 domain; it reads YEVNGIDQSK…WSLAPFKANF (199 aa). Catalysis depends on glutamate 113, which acts as the Nucleophile. Glutamate 117 serves as the catalytic Proton donor. Xyloglucan contacts are provided by residues glutamate 117, 129–131, and 139–141; these read QTN and NRE. Asparagine 180 is a glycosylation site (N-linked (GlcNAc...) asparagine). Xyloglucan-binding positions include 204–205 and glycine 209; that span reads NW. N-linked (GlcNAc...) asparagine glycosylation is found at asparagine 215 and asparagine 229. Cystine bridges form between cysteine 233-cysteine 242 and cysteine 278-cysteine 291. Arginine 283 contributes to the xyloglucan binding site.

This sequence belongs to the glycosyl hydrolase 16 family. XTH group 1 subfamily. Contains at least one intrachain disulfide bond essential for its enzymatic activity.

It is found in the secreted. The protein localises to the cell wall. The protein resides in the extracellular space. It localises to the apoplast. It carries out the reaction breaks a beta-(1-&gt;4) bond in the backbone of a xyloglucan and transfers the xyloglucanyl segment on to O-4 of the non-reducing terminal glucose residue of an acceptor, which can be a xyloglucan or an oligosaccharide of xyloglucan.. May catalyze xyloglucan endohydrolysis (XEH) and/or endotransglycosylation (XET). Cleaves and religates xyloglucan polymers, an essential constituent of the primary cell wall, and thereby participates in cell wall construction of growing tissues. In Arabidopsis thaliana (Mouse-ear cress), this protein is Putative xyloglucan endotransglucosylase/hydrolase protein 1 (XTH1).